The chain runs to 331 residues: 4-hydroxythreonine-4-phosphate dehydrogenase (331 aa).

Substrate-binding residues include His137 and Thr138. A divalent metal cation-binding residues include His167, His212, and His267. Residues Lys275, Asn284, and Arg293 each coordinate substrate.

It belongs to the PdxA family. In terms of assembly, homodimer. Zn(2+) serves as cofactor. The cofactor is Mg(2+). Co(2+) is required as a cofactor.

It is found in the cytoplasm. The catalysed reaction is 4-(phosphooxy)-L-threonine + NAD(+) = 3-amino-2-oxopropyl phosphate + CO2 + NADH. The protein operates within cofactor biosynthesis; pyridoxine 5'-phosphate biosynthesis; pyridoxine 5'-phosphate from D-erythrose 4-phosphate: step 4/5. Catalyzes the NAD(P)-dependent oxidation of 4-(phosphooxy)-L-threonine (HTP) into 2-amino-3-oxo-4-(phosphooxy)butyric acid which spontaneously decarboxylates to form 3-amino-2-oxopropyl phosphate (AHAP). In Yersinia enterocolitica serotype O:8 / biotype 1B (strain NCTC 13174 / 8081), this protein is 4-hydroxythreonine-4-phosphate dehydrogenase.